A 41-amino-acid chain; its full sequence is Entericidin A (41 aa).

A signal peptide spans 1–18; it reads MMKRLIVLVLLASTLLTG. Residue Cys-19 is the site of N-palmitoyl cysteine attachment. Residue Cys-19 is the site of S-diacylglycerol cysteine attachment.

It belongs to the EcnA/EcnB lipoprotein family.

It localises to the cell membrane. In terms of biological role, acts as antidote to the effect of entericidin B. The chain is Entericidin A (ecnA) from Escherichia coli O157:H7.